Consider the following 916-residue polypeptide: Protein translocase subunit SecA (916 aa).

ATP contacts are provided by residues Gln87, 105-109 (GEGKT), and Asp512. The interval 857-916 (QHAEAPSMEQAVAGEEEELPEGPAPVVPLEPVRNEQKIGRNEPCPCGSGKKYKHCHGQLD) is disordered. Positions 900, 902, 911, and 912 each coordinate Zn(2+). The span at 906 to 916 (KKYKHCHGQLD) shows a compositional bias: basic residues.

This sequence belongs to the SecA family. As to quaternary structure, monomer and homodimer. Part of the essential Sec protein translocation apparatus which comprises SecA, SecYEG and auxiliary proteins SecDF-YajC and YidC. The cofactor is Zn(2+).

The protein resides in the cell inner membrane. The protein localises to the cytoplasm. The catalysed reaction is ATP + H2O + cellular proteinSide 1 = ADP + phosphate + cellular proteinSide 2.. Part of the Sec protein translocase complex. Interacts with the SecYEG preprotein conducting channel. Has a central role in coupling the hydrolysis of ATP to the transfer of proteins into and across the cell membrane, serving both as a receptor for the preprotein-SecB complex and as an ATP-driven molecular motor driving the stepwise translocation of polypeptide chains across the membrane. This chain is Protein translocase subunit SecA, found in Pseudomonas aeruginosa (strain LESB58).